A 339-amino-acid chain; its full sequence is N-acetylmuramate/N-acetylglucosamine kinase (339 aa).

Belongs to the kinase AmgK family.

It carries out the reaction N-acetyl-D-muramate + ATP = N-acetyl-alpha-D-muramate 1-phosphate + ADP + H(+). It catalyses the reaction N-acetyl-D-glucosamine + ATP = N-acetyl-alpha-D-glucosamine 1-phosphate + ADP + H(+). It functions in the pathway cell wall biogenesis; peptidoglycan recycling. In terms of biological role, sugar kinase that catalyzes the ATP-dependent phosphorylation of N-acetylmuramate (MurNAc) and N-acetylglucosamine (GlcNAc) at its C1 hydroxyl group, leading to MurNAc alpha-1P and GlcNAc alpha-1P, respectively. Is involved in peptidoglycan recycling as part of a cell wall recycling pathway that bypasses de novo biosynthesis of the peptidoglycan precursor UDP-MurNAc. Plays a role in intrinsic resistance to fosfomycin, which targets the de novo synthesis of UDP-MurNAc. Is also able to use N-acetylgalactosamine (GalNAc) as a substrate, but not N-acetylmannosamine, N-deacetylated sugars or glucose. In Pseudomonas putida (strain ATCC 47054 / DSM 6125 / CFBP 8728 / NCIMB 11950 / KT2440), this protein is N-acetylmuramate/N-acetylglucosamine kinase.